We begin with the raw amino-acid sequence, 699 residues long: Methylcrotonoyl-CoA carboxylase subunit alpha, mitochondrial (699 aa).

The 446-residue stretch at 30–475 folds into the Biotin carboxylation domain; that stretch reads ITKILIANRG…ETGFIPIHRE (446 aa). ATP is bound by residues lysine 144, glutamate 228, and histidine 263. The ATP-grasp domain occupies 148–345; sequence KDIMIKAGVP…LVEWQLKVAE (198 aa). Arginine 320 is a catalytic residue. The 76-residue stretch at 624–699 folds into the Biotinyl-binding domain; it reads KGADGVLGSL…EDKKTLAVIV (76 aa). Lysine 665 is modified (N6-biotinyllysine).

As to quaternary structure, probably a dodecamer composed of six biotin-containing alpha subunits and six beta subunits. Mn(2+) is required as a cofactor. Biotin serves as cofactor.

The protein localises to the mitochondrion matrix. The enzyme catalyses 3-methylbut-2-enoyl-CoA + hydrogencarbonate + ATP = 3-methyl-(2E)-glutaconyl-CoA + ADP + phosphate + H(+). It functions in the pathway amino-acid degradation; L-leucine degradation; (S)-3-hydroxy-3-methylglutaryl-CoA from 3-isovaleryl-CoA: step 2/3. Biotin-attachment subunit of the 3-methylcrotonyl-CoA carboxylase, an enzyme that catalyzes the conversion of 3-methylcrotonyl-CoA to 3-methylglutaconyl-CoA, a critical step for leucine and isovaleric acid catabolism. This chain is Methylcrotonoyl-CoA carboxylase subunit alpha, mitochondrial (mccA), found in Dictyostelium discoideum (Social amoeba).